The primary structure comprises 588 residues: MDTPSAAAETSEPSAQWQAYRGAPTGTDIECEGWRQEAALRMLNNNLDPEVAEDPENLVVYGGTGQAARSWDAYDAILDELRTLADAETLLVQSGKPVGVFETHERAPSVLIANSNLVGNWADWEQFHELEAEGKIMYGQMTAGSWAYIGTQGIIQGTFETLAELARDHYPDNDGLRGKIVATAGLGGMGGAQPLAVTMNHGVCIAAEVDEARIDRRIETGYCMERTDDLGEAIERATAAAEAGDPYSVGVHGNAADVLEGMLDRDFVPDVVTDQTSAHDELAGYYPSGYTVADADELRDEDPDAYREASMDTMARHVAAVLAMQDAGAVAFEYGNNIRGQVAAHRGDVTTTAGESHDPFDFPGFVPAYIRPLFCRGKGPFRWVALSGNPADIHRTDRAVTELFPEKDDLHRWIDLAQEHVQFQGLPSRVCWLGYCAADDDLTERARFAVRINELVDNGEIEAPIVVTRDHLDAGSVASPNRETEAMRDGTDAVADWPILNALLNTAAGADIVSVHNGGGVGIGNSLHTNNHVVLDGSDAAAETARRVFTTDPGMGVIRHADAGYADALVEADASGVTVPMRDAEREQ.

Low complexity predominate over residues 1 to 15; it reads MDTPSAAAETSEPSA. A disordered region spans residues 1-22; the sequence is MDTPSAAAETSEPSAQWQAYRG. Residues 62–63, Gln140, 188–190, Glu208, Arg213, 254–255, 275–279, and Tyr334 each bind NAD(+); these read GG, GMG, NA, and QTSAH. Cys431 is a catalytic residue. Gly520 is a binding site for NAD(+).

Belongs to the urocanase family. NAD(+) serves as cofactor.

It localises to the cytoplasm. It catalyses the reaction 4-imidazolone-5-propanoate = trans-urocanate + H2O. The protein operates within amino-acid degradation; L-histidine degradation into L-glutamate; N-formimidoyl-L-glutamate from L-histidine: step 2/3. In terms of biological role, catalyzes the conversion of urocanate to 4-imidazolone-5-propionate. This is Probable urocanate hydratase from Halobacterium salinarum (strain ATCC 29341 / DSM 671 / R1).